Here is a 452-residue protein sequence, read N- to C-terminus: Probable 1,4-beta-D-glucan cellobiohydrolase A (452 aa).

Residues 1 to 17 (MHQRALLFSALAVAANA) form the signal peptide. An N-linked (GlcNAc...) asparagine glycan is attached at Asn81. Residue Glu226 is the Nucleophile of the active site. Glu231 acts as the Proton donor in catalysis. N-linked (GlcNAc...) asparagine glycosylation is present at Asn284. The tract at residues 405–431 (ADPSKPGVARGTCEHGAGDPENVESQH) is disordered.

Belongs to the glycosyl hydrolase 7 (cellulase C) family.

Its subcellular location is the secreted. The enzyme catalyses Hydrolysis of (1-&gt;4)-beta-D-glucosidic linkages in cellulose and cellotetraose, releasing cellobiose from the non-reducing ends of the chains.. The biological conversion of cellulose to glucose generally requires three types of hydrolytic enzymes: (1) Endoglucanases which cut internal beta-1,4-glucosidic bonds; (2) Exocellobiohydrolases that cut the disaccharide cellobiose from the non-reducing end of the cellulose polymer chain; (3) Beta-1,4-glucosidases which hydrolyze the cellobiose and other short cello-oligosaccharides to glucose. The chain is Probable 1,4-beta-D-glucan cellobiohydrolase A (cbhA) from Aspergillus fumigatus (strain CBS 144.89 / FGSC A1163 / CEA10) (Neosartorya fumigata).